The following is a 293-amino-acid chain: 33 kDa chaperonin (293 aa).

Intrachain disulfides connect C238-C240 and C271-C274.

It belongs to the HSP33 family. In terms of processing, under oxidizing conditions two disulfide bonds are formed involving the reactive cysteines. Under reducing conditions zinc is bound to the reactive cysteines and the protein is inactive.

Its subcellular location is the cytoplasm. Its function is as follows. Redox regulated molecular chaperone. Protects both thermally unfolding and oxidatively damaged proteins from irreversible aggregation. Plays an important role in the bacterial defense system toward oxidative stress. The polypeptide is 33 kDa chaperonin (Staphylococcus aureus (strain Mu3 / ATCC 700698)).